Consider the following 990-residue polypeptide: Translation initiation factor IF-2 (990 aa).

The interval 92-402 (KKRTFVKRDD…QRDEHLQAAP (311 aa)) is disordered. Composition is skewed to low complexity over residues 104 to 116 (EGAA…AAFA) and 131 to 151 (EAPA…AAPA). The span at 158 to 201 (ELARREEQARHQAELIRRQEAELAAKRAAREAREKREREAEERA) shows a compositional bias: basic and acidic residues. Residues 223 to 243 (TREQAAEATARNAAQLQARAK) are compositionally biased toward low complexity. A compositionally biased stretch (basic and acidic residues) spans 244-264 (AAAESKARSDEEAARAADLDA). 2 stretches are compositionally biased toward low complexity: residues 281–290 (ATPKKAVMVA) and 318–342 (PAVG…PGAG). 2 stretches are compositionally biased toward basic and acidic residues: residues 358–368 (PAKKKEIKTRG) and 386–398 (RRGD…DEHL). Residues 490-659 (PRAPVVTVMG…LLQADVMELK (170 aa)) form the tr-type G domain. The tract at residues 499 to 506 (GHVDHGKT) is G1. 499 to 506 (GHVDHGKT) lines the GTP pocket. The tract at residues 524–528 (GITQH) is G2. Positions 545 to 548 (DTPG) are G3. GTP-binding positions include 545-549 (DTPGH) and 599-602 (TKAD). A G4 region spans residues 599–602 (TKAD). The interval 635-637 (SSK) is G5.

Belongs to the TRAFAC class translation factor GTPase superfamily. Classic translation factor GTPase family. IF-2 subfamily.

The protein localises to the cytoplasm. Functionally, one of the essential components for the initiation of protein synthesis. Protects formylmethionyl-tRNA from spontaneous hydrolysis and promotes its binding to the 30S ribosomal subunits. Also involved in the hydrolysis of GTP during the formation of the 70S ribosomal complex. In Verminephrobacter eiseniae (strain EF01-2), this protein is Translation initiation factor IF-2.